The primary structure comprises 34 residues: Photosystem I reaction center subunit XII (34 aa).

The chain crosses the membrane as a helical span at residues 11-31; the sequence is VAIAFVVALIAGIAALLLSTA.

This sequence belongs to the PsaM family. In terms of assembly, the G.violaceus PSI reaction center is composed of one copy each of PsaA,B,C,D,E,F,L,M and Z, and forms trimeric complexes.

The protein resides in the cell inner membrane. The protein is Photosystem I reaction center subunit XII of Gloeobacter violaceus (strain ATCC 29082 / PCC 7421).